Consider the following 339-residue polypeptide: MIRVGIIGATGYTGLELVRILTNHPDVKITFLSSRSFAGKKLNDVYPFSLKNETLEEIDPEKISKNCDVVFTALPAGVSYEIARKLKDVRIIDLGADFRFDDPAVYEEWYSKKLPDYDPTERVYGLTELYREKIKNARFVGNPGCYPTSVLLATAPLLKNGSLDEETIIVDSKSGVSGAGKKESIDYSFSELSGSLKAYNVSKHRHVPEMEQEMSKLCGKRLKLVFTPHLVPMVRGILSTIYVKTDLSLDEVYELYREYYGKEKFIHVLQPGVYPSTKWTYGSNHAFISMAKDDRTDTLILISVIDNLVKGASGQAVQNMNVMFSLAEDAGLSFNPIYP.

C145 is a catalytic residue.

It belongs to the NAGSA dehydrogenase family. Type 1 subfamily.

It localises to the cytoplasm. The catalysed reaction is N-acetyl-L-glutamate 5-semialdehyde + phosphate + NADP(+) = N-acetyl-L-glutamyl 5-phosphate + NADPH + H(+). It participates in amino-acid biosynthesis; L-arginine biosynthesis; N(2)-acetyl-L-ornithine from L-glutamate: step 3/4. Its function is as follows. Catalyzes the NADPH-dependent reduction of N-acetyl-5-glutamyl phosphate to yield N-acetyl-L-glutamate 5-semialdehyde. In Kosmotoga olearia (strain ATCC BAA-1733 / DSM 21960 / TBF 19.5.1), this protein is N-acetyl-gamma-glutamyl-phosphate reductase.